The sequence spans 564 residues: Dihydroxy-acid dehydratase (564 aa).

Cysteine 53 contacts [2Fe-2S] cluster. Mg(2+) is bound at residue aspartate 85. Cysteine 126 contributes to the [2Fe-2S] cluster binding site. 2 residues coordinate Mg(2+): aspartate 127 and lysine 128. Lysine 128 is modified (N6-carboxylysine). Residue cysteine 203 coordinates [2Fe-2S] cluster. Glutamate 454 is a binding site for Mg(2+). Serine 480 serves as the catalytic Proton acceptor.

The protein belongs to the IlvD/Edd family. As to quaternary structure, homodimer. The cofactor is [2Fe-2S] cluster. Requires Mg(2+) as cofactor.

It carries out the reaction (2R)-2,3-dihydroxy-3-methylbutanoate = 3-methyl-2-oxobutanoate + H2O. It catalyses the reaction (2R,3R)-2,3-dihydroxy-3-methylpentanoate = (S)-3-methyl-2-oxopentanoate + H2O. It functions in the pathway amino-acid biosynthesis; L-isoleucine biosynthesis; L-isoleucine from 2-oxobutanoate: step 3/4. Its pathway is amino-acid biosynthesis; L-valine biosynthesis; L-valine from pyruvate: step 3/4. Functions in the biosynthesis of branched-chain amino acids. Catalyzes the dehydration of (2R,3R)-2,3-dihydroxy-3-methylpentanoate (2,3-dihydroxy-3-methylvalerate) into 2-oxo-3-methylpentanoate (2-oxo-3-methylvalerate) and of (2R)-2,3-dihydroxy-3-methylbutanoate (2,3-dihydroxyisovalerate) into 2-oxo-3-methylbutanoate (2-oxoisovalerate), the penultimate precursor to L-isoleucine and L-valine, respectively. The chain is Dihydroxy-acid dehydratase from Leifsonia xyli subsp. xyli (strain CTCB07).